Here is a 254-residue protein sequence, read N- to C-terminus: Phosphoribosylaminoimidazole-succinocarboxamide synthase (254 aa).

The protein belongs to the SAICAR synthetase family.

The enzyme catalyses 5-amino-1-(5-phospho-D-ribosyl)imidazole-4-carboxylate + L-aspartate + ATP = (2S)-2-[5-amino-1-(5-phospho-beta-D-ribosyl)imidazole-4-carboxamido]succinate + ADP + phosphate + 2 H(+). It participates in purine metabolism; IMP biosynthesis via de novo pathway; 5-amino-1-(5-phospho-D-ribosyl)imidazole-4-carboxamide from 5-amino-1-(5-phospho-D-ribosyl)imidazole-4-carboxylate: step 1/2. The chain is Phosphoribosylaminoimidazole-succinocarboxamide synthase from Brucella abortus (strain S19).